The primary structure comprises 332 residues: 2,3-diketo-L-gulonate reductase (332 aa).

Residue H44 is the Proton donor of the active site. Residues 168–174 (ITMVDMS), 224–225 (WK), and 304–306 (GHE) contribute to the NAD(+) site.

This sequence belongs to the LDH2/MDH2 oxidoreductase family. DlgD subfamily. As to quaternary structure, homodimer.

The protein localises to the cytoplasm. It catalyses the reaction 3-dehydro-L-gulonate + NAD(+) = 2,3-dioxo-L-gulonate + NADH + H(+). It carries out the reaction 3-dehydro-L-gulonate + NADP(+) = 2,3-dioxo-L-gulonate + NADPH + H(+). Its function is as follows. Catalyzes the reduction of 2,3-diketo-L-gulonate in the presence of NADH, to form 3-keto-L-gulonate. In Salmonella paratyphi C (strain RKS4594), this protein is 2,3-diketo-L-gulonate reductase.